The following is a 328-amino-acid chain: Malate dehydrogenase (328 aa).

Residue 12-18 (GAAGQIG) participates in NAD(+) binding. The substrate site is built by Arg-95 and Arg-101. Residues Asn-108, Gln-115, and 132 to 134 (VGN) contribute to the NAD(+) site. 2 residues coordinate substrate: Asn-134 and Arg-165. His-190 functions as the Proton acceptor in the catalytic mechanism.

It belongs to the LDH/MDH superfamily. MDH type 2 family.

It catalyses the reaction (S)-malate + NAD(+) = oxaloacetate + NADH + H(+). Its function is as follows. Catalyzes the reversible oxidation of malate to oxaloacetate. This chain is Malate dehydrogenase, found in Methylibium petroleiphilum (strain ATCC BAA-1232 / LMG 22953 / PM1).